A 183-amino-acid chain; its full sequence is Ly6/PLAUR domain-containing protein 6B (183 aa).

Residues 1-39 form the signal peptide; the sequence is MLYKSSDRPAHKVSMLLLCHALAIAVVQIVIFSESWAFA. The 92-residue stretch at 60 to 151 folds into the UPAR/Ly6 domain; the sequence is FKCFTCENAG…VELPTNHTNA (92 aa). Positions 60–154 are sufficient for inhibiting alpha-7 nAChR currents; it reads FKCFTCENAG…PTNHTNAVFA (95 aa). 6 cysteine pairs are disulfide-bonded: Cys-62–Cys-90, Cys-65–Cys-74, Cys-83–Cys-109, Cys-115–Cys-134, Cys-120–Cys-131, and Cys-135–Cys-140. Ser-164 carries GPI-anchor amidated serine lipidation. The propeptide at 165–183 is removed in mature form; the sequence is SAPTLYLPVLAWVFVLPLL.

The protein localises to the cell membrane. Likely acts as a modulator of nicotinic acetylcholine receptors (nAChRs) activity. In vitro acts on nAChRs in a subtype- and stoichiometry-dependent manner. Modulates specifically alpha-3(3):beta-4(2) nAChRs by enhancing the sensitivity to ACh, decreasing ACh-induced maximal current response and increasing the rate of desensitization to ACh; has no effect on alpha-7 homomeric nAChRs; modulates alpha-3(2):alpha-5:beta-4(2) nAChRs in the context of CHRNA5/alpha-5 variant Asn-398 but not its wild-type sequence. However, according to another report in vitro it can weakly inhibits alpha-7 nAChRs. The protein is Ly6/PLAUR domain-containing protein 6B (LYPD6B) of Homo sapiens (Human).